The primary structure comprises 47 residues: Potassium channel toxin alpha-KTx 7.1 (47 aa).

A signal peptide spans 1-12 (RGSVDYKDDDDK). Intrachain disulfides connect cysteine 16–cysteine 37, cysteine 22–cysteine 42, and cysteine 26–cysteine 44.

This sequence belongs to the short scorpion toxin superfamily. Potassium channel inhibitor family. Alpha-KTx 07 subfamily. Expressed by the venom gland.

The protein resides in the secreted. Potent inhibitor of the A-type voltage-gated potassium channels. Most potent inhibitor of Kv1.2/KCNA2 channels. Reversibly block the Shaker B potassium-channels (Kv1.1 sub-family). The sequence is that of Potassium channel toxin alpha-KTx 7.1 (PTX-1) from Pandinus imperator (Emperor scorpion).